A 288-amino-acid polypeptide reads, in one-letter code: MAENKKAVQRRIRAVKSTQQITKAMKMVDAAKLRRAQEKVQNARPYSRELAKTLGRLIQAGAGIDHPLLHRRTEGTPTVAYVLLTADRGLAGAFNINVIRKAHQALQKESRPTKLITIGRKGRDYFVKRKIQPVLEFVNLGDNITFALARSVLSKIVDLYLSGEVDEVRVIYTEFVNAVTQRPKEMQLLPIQPAQADGAHTHVEYIYEPSPERVLDTLVPRYAETMFYQLMLESKASEHGARMTAMGNATDNAEEMIAKLTLAYNRARQAAITREISEIVGGANALQG.

This sequence belongs to the ATPase gamma chain family. In terms of assembly, F-type ATPases have 2 components, CF(1) - the catalytic core - and CF(0) - the membrane proton channel. CF(1) has five subunits: alpha(3), beta(3), gamma(1), delta(1), epsilon(1). CF(0) has three main subunits: a, b and c.

It is found in the cell membrane. In terms of biological role, produces ATP from ADP in the presence of a proton gradient across the membrane. The gamma chain is believed to be important in regulating ATPase activity and the flow of protons through the CF(0) complex. The polypeptide is ATP synthase gamma chain (Symbiobacterium thermophilum (strain DSM 24528 / JCM 14929 / IAM 14863 / T)).